Consider the following 101-residue polypeptide: Small ribosomal subunit protein uS10 (101 aa).

Belongs to the universal ribosomal protein uS10 family. In terms of assembly, part of the 30S ribosomal subunit.

In terms of biological role, involved in the binding of tRNA to the ribosomes. In Mycobacterium avium (strain 104), this protein is Small ribosomal subunit protein uS10.